A 162-amino-acid polypeptide reads, in one-letter code: Heat shock protein beta-6 (162 aa).

An involved in stabilization of the HSPB1:HSBP6 heterodimer region spans residues 1–72 (MEIPVPVQPS…PTAQVSTDSG (72 aa)). S16 is modified (phosphoserine). A sHSP domain is found at 56–162 (RAPSVALPTA…AQLPSPPAAK (107 aa)). Position 66 is a deamidated glutamine (Q66). S157 is modified (phosphoserine).

Belongs to the small heat shock protein (HSP20) family. In terms of assembly, homodimer. Small heat shock proteins form high molecular mass oligomers containing variable number of monomers; these oligomers display a very flexible quaternary structure easily exchanging their subunits. Heterooligomer with HSPB1; formed through oligomerization of HSPB1:HSBP6 dimers; subunit exchange leads to formation of at least two different heterooligomeric complexes, differing in variable quantities of HSPB1 and HSPB6 homodimers in addition to HSPB1:HSPB6 heterodimers. Heterooligomer with CRYAB; large heterooligomers consist of CRYAB homodimers and HSPB5:HSPB6 heterodimers but lacking HSPB6 homodimers. Interacts with BAG3. Interacts (phosphorylated) with YWHAZ. Interacts with PDE4A and PDE4D; required for maintenance of the non-phosphorylated state of HSPB6 under basal conditions. Interacts with KDR. Interacts with PRKD1. In terms of processing, phosphorylated at Ser-16 by PKA and probably PKD1K; required to protect cardiomyocytes from apoptosis.

Its subcellular location is the cytoplasm. The protein resides in the nucleus. The protein localises to the secreted. Its function is as follows. Small heat shock protein which functions as a molecular chaperone probably maintaining denatured proteins in a folding-competent state. Seems to have versatile functions in various biological processes. Plays a role in regulating muscle function such as smooth muscle vasorelaxation and cardiac myocyte contractility. May regulate myocardial angiogenesis implicating KDR. Overexpression mediates cardioprotection and angiogenesis after induced damage. Stabilizes monomeric YWHAZ thereby supporting YWHAZ chaperone-like activity. The polypeptide is Heat shock protein beta-6 (Hspb6) (Mus musculus (Mouse)).